A 301-amino-acid polypeptide reads, in one-letter code: Ribosomal protein L11 methyltransferase (301 aa).

Positions 146, 167, 189, and 234 each coordinate S-adenosyl-L-methionine.

The protein belongs to the methyltransferase superfamily. PrmA family.

It localises to the cytoplasm. The enzyme catalyses L-lysyl-[protein] + 3 S-adenosyl-L-methionine = N(6),N(6),N(6)-trimethyl-L-lysyl-[protein] + 3 S-adenosyl-L-homocysteine + 3 H(+). Its function is as follows. Methylates ribosomal protein L11. This chain is Ribosomal protein L11 methyltransferase, found in Acinetobacter baumannii (strain SDF).